The primary structure comprises 171 residues: Ribosome maturation factor RimM (171 aa).

The PRC barrel domain occupies 96-170 (AEGEYYYHEI…LVTIHVMEGL (75 aa)).

The protein belongs to the RimM family. Binds ribosomal protein uS19.

It is found in the cytoplasm. In terms of biological role, an accessory protein needed during the final step in the assembly of 30S ribosomal subunit, possibly for assembly of the head region. Essential for efficient processing of 16S rRNA. May be needed both before and after RbfA during the maturation of 16S rRNA. It has affinity for free ribosomal 30S subunits but not for 70S ribosomes. This Bacillus cereus (strain G9842) protein is Ribosome maturation factor RimM.